The primary structure comprises 172 residues: VQ motif-containing protein 17 (172 aa).

The VQ signature appears at 51-60 (FREIVQNLTG). Residues 60–97 (GKQDHHHHDLPHQKGLKRNPRSRRSHDHHEVHDMNKSH) are disordered. Over residues 61 to 71 (KQDHHHHDLPH) the composition is skewed to basic and acidic residues. Residues 72 to 85 (QKGLKRNPRSRRSH) are compositionally biased toward basic residues. Residues 86-95 (DHHEVHDMNK) are compositionally biased toward basic and acidic residues.

It is found in the nucleus. Functionally, may function as positive regulator of plant growth. The protein is VQ motif-containing protein 17 of Arabidopsis thaliana (Mouse-ear cress).